The primary structure comprises 1147 residues: Topoisomerase 1-associated factor 1 (1147 aa).

Disordered regions lie at residues 564 to 598 (QIRSRRRAKRKKQLEQKGDENNGEEQDSEEEEMLE), 799 to 823 (AEREENTRASRAPNPMIPVEPSDDD), 898 to 1002 (FQRE…ADEE), and 1027 to 1147 (VEEL…SDSE). Residues 566 to 575 (RSRRRAKRKK) show a composition bias toward basic residues. Over residues 584-597 (NNGEEQDSEEEEML) the composition is skewed to acidic residues. A compositionally biased stretch (polar residues) spans 907–916 (EPTQEVSFGN). 3 stretches are compositionally biased toward basic and acidic residues: residues 950 to 992 (KNDD…HASD), 1054 to 1063 (SQNKRLRQDI), and 1096 to 1106 (EDDLAFRRNRE).

It belongs to the timeless family. In terms of assembly, component of the fork protection complex (FPC) consisting of tof1 and csm3.

It is found in the nucleus. Forms a fork protection complex (FPC) with csm3 and which is required for chromosome segregation during meiosis and DNA damage repair. FPC coordinates leading and lagging strand synthesis and moves with the replication fork. FPC stabilizes replication forks in a configuration that is recognized by replication checkpoint sensors. The polypeptide is Topoisomerase 1-associated factor 1 (tof1) (Aspergillus terreus (strain NIH 2624 / FGSC A1156)).